Here is a 38-residue protein sequence, read N- to C-terminus: MTQSNPNEQSVELNRTSLYWGLLLIFVLAVLFSNYFFN.

The chain crosses the membrane as a helical span at residues 17–37; it reads SLYWGLLLIFVLAVLFSNYFF.

Belongs to the PsbL family. In terms of assembly, PSII is composed of 1 copy each of membrane proteins PsbA, PsbB, PsbC, PsbD, PsbE, PsbF, PsbH, PsbI, PsbJ, PsbK, PsbL, PsbM, PsbT, PsbX, PsbY, PsbZ, Psb30/Ycf12, at least 3 peripheral proteins of the oxygen-evolving complex and a large number of cofactors. It forms dimeric complexes.

It localises to the plastid. The protein resides in the chloroplast thylakoid membrane. One of the components of the core complex of photosystem II (PSII). PSII is a light-driven water:plastoquinone oxidoreductase that uses light energy to abstract electrons from H(2)O, generating O(2) and a proton gradient subsequently used for ATP formation. It consists of a core antenna complex that captures photons, and an electron transfer chain that converts photonic excitation into a charge separation. This subunit is found at the monomer-monomer interface and is required for correct PSII assembly and/or dimerization. The chain is Photosystem II reaction center protein L from Antirrhinum majus (Garden snapdragon).